Reading from the N-terminus, the 463-residue chain is L-seryl-tRNA(Sec) selenium transferase (463 aa).

Lys-295 bears the N6-(pyridoxal phosphate)lysine mark.

Belongs to the SelA family. Homodecamer; pentamer of dimers. Binds only one seryl-tRNA(Sec) per dimer. Pyridoxal 5'-phosphate is required as a cofactor.

The protein localises to the cytoplasm. The catalysed reaction is L-seryl-tRNA(Sec) + selenophosphate + H(+) = L-selenocysteinyl-tRNA(Sec) + phosphate. The protein operates within aminoacyl-tRNA biosynthesis; selenocysteinyl-tRNA(Sec) biosynthesis; selenocysteinyl-tRNA(Sec) from L-seryl-tRNA(Sec) (bacterial route): step 1/1. Its function is as follows. Converts seryl-tRNA(Sec) to selenocysteinyl-tRNA(Sec) required for selenoprotein biosynthesis. This is L-seryl-tRNA(Sec) selenium transferase from Salmonella paratyphi A (strain AKU_12601).